A 1462-amino-acid polypeptide reads, in one-letter code: MADKDAQDFLKFLKSNASTDEKTRCLDTLRSFFNKNNIPNADLGLFVECFRLALTTVNPLLLRSSVACFETFLRRLRAQYPTWLKFRVPMLKNLVIDHIASRDLQKRVLNILIDLWHFNPSEIEKSLIHLSTTSKSAETRIQCFKWFVLAHNAHLSFDVKSLRPALYINLENANPSVREEAKEVLLLIYKNLSTSAKMQFITDVETTSGLRREILQSLVEELSLISSSSEVIIVQNSASSFQPAPFMTAVATLYPGVELENVKPLLANFSKQLEQDSASMLPAFEGRETEQNWSVRQDSVLRLRQYLRGNACIDYLPELLSVLKTLLPGILLALLSLRTTLSSSAIQLIKEMAIILKSNIDPFLELILPNLLKVCSVTKKLASQAANVTFAAILVNCGVLSRNLSFISLAAHDTNAQLRVFSSNWIFMLISLSPELKNLASLQTNLKAFEKLICRGLADSNSQVREVYRKSFWKLSEYFPSVQEELTNTLEPSVLKQLHLANPNRQAASFNFSGPKRAPIRPLSNLRSFSKSQKEETSSNSSNSSGTRRLGLPQRATPASRERVLPYTRSQAFHSTSLPPSLPSGHSPSIAIPSKRSVSATIKDESKTFELLKNIQRKYELILSGSSVDLPSAEFLSSNLTDALYSGSSICYSLIFSHSLLDLTFQYVDIASLLSQFLLCVYDPSNVGHSFALASFPYVKSHYDAHKYFPIVFDVLMNISNMAPHVKVFPFNTNQKRLIIHGCLLWLKEISDTKLNQLENKPFFVTDKLRYYSSKILAMTAKTKLTSKNWIPLSGLLFSLRAHDTFMFDGLLDRLNEESRTKLVSSWSKQDAFDYSKSSTHQEHLSKNLPTLNTSSSSNSSQTDLLVPHGKGETKETEMQSPIESKEGLLSKDTHIESPQGTSLEKENEEEGKNPVESNCSEESLDDHNIDQTLVNKKETLAQDSESLLQKNNALNEKGFENQFGLSSSAAKVLNKDTLDHVSGPISNSVSSSFKDFTRTPFKEINGERETGFELTSYVNALSKKDDINVQKTENVDESVGLNAMFMDNVNQDSLNSVDQSSGKDKLLLTSSTPNKPTTFFMPANEEILGSPAKDYDIHDQSYSVHELHSENMRENVGQSSLIYNNRDYMNTPMNDFSLSFSEIKGGILESPVESPMTGTISPIDADESVLHDIPAYESLNKSESNKYQEQAYSTPLHHTLNVLPKNKWILSRMHKMENGSPINVDKNLDDAVAALEAAVKELNDGSVNTKTLKFCIKVCKETPSMLYHSHGLLPAILHYIESNNSAMHISDCLILLHEFLVQGYQGVDMHTYHNIICILIEKAEKCKDEPVILAGIEDNITLIAEIADLQGLYEFTQQRLQSLNTETGEKSAPLLLMLLSAILMRLKDLEFLETKDLLRHVVLKYIDHTNPEIRKATFNVCLAVNTIVNNVDETFSILGGLNEGQRLLFMHYLKMKSDEKN.

Disordered regions lie at residues 528 to 563 (SFSKSQKEETSSNSSNSSGTRRLGLPQRATPASRER) and 573 to 592 (FHSTSLPPSLPSGHSPSIAI). Composition is skewed to low complexity over residues 538 to 552 (SSNSSNSSGTRRLGL) and 574 to 589 (HSTSLPPSLPSGHSPS). Ser599 carries the phosphoserine modification. A disordered region spans residues 838 to 928 (SSTHQEHLSK…NCSEESLDDH (91 aa)). Positions 847-866 (KNLPTLNTSSSSNSSQTDLL) are enriched in low complexity. Over residues 870-896 (GKGETKETEMQSPIESKEGLLSKDTHI) the composition is skewed to basic and acidic residues. Ser1221 is subject to Phosphoserine. A coiled-coil region spans residues 1342-1367 (TLIAEIADLQGLYEFTQQRLQSLNTE).

Belongs to the CLASP family. In terms of assembly, interacts with microtubules. Interacts with dhc1, mal3 and tea1.

The protein resides in the cytoplasm. Its subcellular location is the cytoskeleton. The protein localises to the spindle. It is found in the microtubule organizing center. It localises to the spindle pole body. Its function is as follows. Microtubule binding protein that regulates the stability of dynamic microtubules. Required for mitotic spindle formation. The protein is Protein peg1 (peg1) of Schizosaccharomyces pombe (strain 972 / ATCC 24843) (Fission yeast).